A 137-amino-acid chain; its full sequence is Transcription antitermination protein NusB (137 aa).

It belongs to the NusB family.

In terms of biological role, involved in transcription antitermination. Required for transcription of ribosomal RNA (rRNA) genes. Binds specifically to the boxA antiterminator sequence of the ribosomal RNA (rrn) operons. The chain is Transcription antitermination protein NusB from Clavibacter sepedonicus (Clavibacter michiganensis subsp. sepedonicus).